The following is a 340-amino-acid chain: Phosphoribosylformylglycinamidine cyclo-ligase (340 aa).

Belongs to the AIR synthase family.

The protein resides in the cytoplasm. It catalyses the reaction 2-formamido-N(1)-(5-O-phospho-beta-D-ribosyl)acetamidine + ATP = 5-amino-1-(5-phospho-beta-D-ribosyl)imidazole + ADP + phosphate + H(+). Its pathway is purine metabolism; IMP biosynthesis via de novo pathway; 5-amino-1-(5-phospho-D-ribosyl)imidazole from N(2)-formyl-N(1)-(5-phospho-D-ribosyl)glycinamide: step 2/2. The protein is Phosphoribosylformylglycinamidine cyclo-ligase of Streptococcus mutans serotype c (strain ATCC 700610 / UA159).